Reading from the N-terminus, the 393-residue chain is Chorismate synthase (393 aa).

Positions 40 and 46 each coordinate NADP(+). FMN-binding positions include 129-131, 249-250, glycine 301, 316-320, and arginine 342; these read RSS, QA, and KPIPT.

This sequence belongs to the chorismate synthase family. In terms of assembly, homotetramer. FMNH2 serves as cofactor.

It carries out the reaction 5-O-(1-carboxyvinyl)-3-phosphoshikimate = chorismate + phosphate. Its pathway is metabolic intermediate biosynthesis; chorismate biosynthesis; chorismate from D-erythrose 4-phosphate and phosphoenolpyruvate: step 7/7. Functionally, catalyzes the anti-1,4-elimination of the C-3 phosphate and the C-6 proR hydrogen from 5-enolpyruvylshikimate-3-phosphate (EPSP) to yield chorismate, which is the branch point compound that serves as the starting substrate for the three terminal pathways of aromatic amino acid biosynthesis. This reaction introduces a second double bond into the aromatic ring system. The polypeptide is Chorismate synthase (Pelobacter propionicus (strain DSM 2379 / NBRC 103807 / OttBd1)).